The chain runs to 65 residues: Large ribosomal subunit protein bL35 (65 aa).

Belongs to the bacterial ribosomal protein bL35 family.

In Prochlorococcus marinus (strain NATL1A), this protein is Large ribosomal subunit protein bL35.